Here is a 31-residue protein sequence, read N- to C-terminus: Cytochrome b6-f complex subunit 6 (31 aa).

Residues 4 to 26 (ITSYFGFLLAASTITPALLIGLS) form a helical membrane-spanning segment.

The protein belongs to the PetL family. As to quaternary structure, the 4 large subunits of the cytochrome b6-f complex are cytochrome b6, subunit IV (17 kDa polypeptide, PetD), cytochrome f and the Rieske protein, while the 4 small subunits are PetG, PetL, PetM and PetN. The complex functions as a dimer.

Its subcellular location is the plastid. It is found in the chloroplast thylakoid membrane. Component of the cytochrome b6-f complex, which mediates electron transfer between photosystem II (PSII) and photosystem I (PSI), cyclic electron flow around PSI, and state transitions. PetL is important for photoautotrophic growth as well as for electron transfer efficiency and stability of the cytochrome b6-f complex. The polypeptide is Cytochrome b6-f complex subunit 6 (Liriodendron tulipifera (Tuliptree)).